Consider the following 645-residue polypeptide: Transcription termination factor FttA (645 aa).

Residues 10-77 (APSNQNIMAT…IIVRIDESVR (68 aa)) are KHa. The tract at residues 78-146 (KKEEDARKML…WTLRIRKATT (69 aa)) is KHb. The interval 187–391 (EISLTALGGF…LLIESTYGAK (205 aa)) is metallo-beta-lactamase N-terminus. Residues His250, His252, Asp254, His255, His337, and Asp360 each coordinate Zn(2+). Positions 392–586 (EDIQPTRQEV…CRMEKLDGFS (195 aa)) are beta-Casp. Residues 587 to 645 (GHSDYNQLTGFVQKLRPKLRRVLVNHGERRKSENLALAVRRMFRIPAHYPQIQESIKLF) are metallo-beta-lactamase C-terminus. His612 contributes to the Zn(2+) binding site.

The protein belongs to the metallo-beta-lactamase superfamily. RNA-metabolizing metallo-beta-lactamase-like family. FttA subfamily. As to quaternary structure, homodimer. Interacts with RNA polymerase (RNAP), interacts with the Spt4-Spt5 complex. The cofactor is Zn(2+).

In terms of biological role, terminates transcription on the whole genome. Termination is linked to FttA-mediated RNA cleavage and does not require NTP hydrolysis. Cleaves endonucleolytically at the RNA exit channel of RNA polymerase (RNAP); the 5'-3' exonuclease activity of this protein degrades the nascent RNA released from RNAP. Functionally, terminates transcription genome-wide in M.maripaludis. Restores wild-type growth to a strain of Methanococcus maripaludis depleted for this gene at 22 degrees Celsius and prevents transcriptional read-through. Transcription termination is most effective in vivo on RNAs with more than one U4-tract in their 3'-ends. Has endonuclease activity after U-rich tracts in transcription termination sequences. The protein is Transcription termination factor FttA of Cenarchaeum symbiosum (strain A).